The chain runs to 728 residues: 1,4-alpha-glucan branching enzyme GlgB (728 aa).

Asp405 serves as the catalytic Nucleophile. The Proton donor role is filled by Glu458.

The protein belongs to the glycosyl hydrolase 13 family. GlgB subfamily. As to quaternary structure, monomer.

It catalyses the reaction Transfers a segment of a (1-&gt;4)-alpha-D-glucan chain to a primary hydroxy group in a similar glucan chain.. It participates in glycan biosynthesis; glycogen biosynthesis. In terms of biological role, catalyzes the formation of the alpha-1,6-glucosidic linkages in glycogen by scission of a 1,4-alpha-linked oligosaccharide from growing alpha-1,4-glucan chains and the subsequent attachment of the oligosaccharide to the alpha-1,6 position. In Salmonella arizonae (strain ATCC BAA-731 / CDC346-86 / RSK2980), this protein is 1,4-alpha-glucan branching enzyme GlgB.